Reading from the N-terminus, the 340-residue chain is Ketol-acid reductoisomerase (NADP(+)) (340 aa).

The 181-residue stretch at 2–182 (ANIYYENHAD…GCTRAGVIET (181 aa)) folds into the KARI N-terminal Rossmann domain. NADP(+) contacts are provided by residues 25–28 (FGSQ), serine 51, serine 53, and 83–86 (DTAQ). Residue histidine 108 is part of the active site. Residue glycine 134 participates in NADP(+) binding. The region spanning 183–328 (TFAEETETDL…RELRRMMPFV (146 aa)) is the KARI C-terminal knotted domain. Mg(2+) is bound by residues aspartate 191, glutamate 195, glutamate 227, and glutamate 231. Position 252 (serine 252) interacts with substrate.

This sequence belongs to the ketol-acid reductoisomerase family. Mg(2+) serves as cofactor.

The enzyme catalyses (2R)-2,3-dihydroxy-3-methylbutanoate + NADP(+) = (2S)-2-acetolactate + NADPH + H(+). It carries out the reaction (2R,3R)-2,3-dihydroxy-3-methylpentanoate + NADP(+) = (S)-2-ethyl-2-hydroxy-3-oxobutanoate + NADPH + H(+). It participates in amino-acid biosynthesis; L-isoleucine biosynthesis; L-isoleucine from 2-oxobutanoate: step 2/4. The protein operates within amino-acid biosynthesis; L-valine biosynthesis; L-valine from pyruvate: step 2/4. In terms of biological role, involved in the biosynthesis of branched-chain amino acids (BCAA). Catalyzes an alkyl-migration followed by a ketol-acid reduction of (S)-2-acetolactate (S2AL) to yield (R)-2,3-dihydroxy-isovalerate. In the isomerase reaction, S2AL is rearranged via a Mg-dependent methyl migration to produce 3-hydroxy-3-methyl-2-ketobutyrate (HMKB). In the reductase reaction, this 2-ketoacid undergoes a metal-dependent reduction by NADPH to yield (R)-2,3-dihydroxy-isovalerate. The polypeptide is Ketol-acid reductoisomerase (NADP(+)) (Roseiflexus castenholzii (strain DSM 13941 / HLO8)).